The sequence spans 402 residues: Advanced glycosylation end product-specific receptor (402 aa).

An N-terminal signal peptide occupies residues 1-22; sequence MPAGTAARAWVLVLALWGAVAG. Residues 23-109 enclose the Ig-like V-type domain; the sequence is GQNITARIGE…ATNRRGKEVK (87 aa). Residues 23–340 lie on the Extracellular side of the membrane; that stretch reads GQNITARIGE…VGESGLGTLA (318 aa). N25 and N80 each carry an N-linked (GlcNAc...) asparagine glycan. Cystine bridges form between C38–C98 and C143–C206. Ig-like C2-type domains are found at residues 123–219 and 233–315; these read PEIV…RPLN and PEGI…PPVS. The tract at residues 295–332 is disordered; that stretch reads GTYSCVATHPSHGPQESPPVSIRVTETGDEGPAEGSVG. The chain crosses the membrane as a helical span at residues 341-361; the sequence is LALGILGGLGVVALLVGAILW. The Cytoplasmic portion of the chain corresponds to 362–402; the sequence is RKRQPRREERKAPESQEDEEERAELNQSEEAEMPENGAGGP. Positions 365-402 are disordered; the sequence is QPRREERKAPESQEDEEERAELNQSEEAEMPENGAGGP. 2 positions are modified to phosphoserine; by ATM: S376 and S389. Acidic residues predominate over residues 376 to 394; sequence SQEDEEERAELNQSEEAEM.

In terms of assembly, constitutive homodimer; disulfide-linked. Forms homooligomers. Interacts with S100A1 and APP. Interacts with S100B, S100A12 and S100A14. Interacts with TIRAP. Interacts with HMGB1. Interacts with LGP2; this interaction plays an important role in AGER-mediated pro-inflammatory responses and cytokine release. Interacts with double-strand break repair protein MRE11 which is a core component of the MRN complex; the interaction enhances MRE11 endonuclease activity and promotes DNA repair. Interacts with the MCM2-7 complex via interaction with complex member MCM2; the interaction is increased following DNA replication stress and stabilizes the MCM2-7 complex at replication forks. Post-translationally, phosphorylated on its cytoplasmic domain by PKCzeta/PRKCZ upon ligand binding. Phosphorylated by ATM following DNA damage. In terms of processing, targeted by the ubiquitin E3 ligase subunit FBXO10 to mediate its ubiquitination and degradation. Isoform 1: Expressed at higher levels in the coronary arterioles in type 2 diabetic mice (at protein level). Endothelial cells. Expressed in lung, kidney, brain and heart. Most prevalent isoform with the highest level in heart. Isoform 2: Expressed in brain, lung, kidney and small intestine with the highest level in lung. Expressed in brain, lung, kidney and small intestine with the highest level in small intestine (at protein level). Detected in neurons of the cerebrum, bronchial epithelium, endothelial cells, tubular cells of kidney and epithelial cells of small intestine (at protein level). Expression is increased in the kidney of diabetic wild-type mice (at protein level), but not in the other tissues. Expressed only in kidney. Expression is increased in the kidney of diabetic mice. Isoform 3: Expressed in lung, kidney and heart. The second most prevalent isoform with the highest level in lung. Not expressed in brain. Isoform 4: Expressed at very low level in lung only. Isoform 5: Expressed at very low level in lung only. Isoform 6: Expressed at very low level in lung only. Isoform 7: Expressed at very low level in heart only. Isoform 8: Expressed at very low level in lung only. Isoform 9: Expressed at very low level in heart only. Isoform 10: Expressed in lung, brain, heart and kidney with a very high level in kidney. Isoform 11: Expressed in brain, kidney and heart. Not expressed in lung. Isoform 12: Expressed at very low level in lung and kidney. Isoform 13: Expressed at very low level in lung only.

The protein localises to the cell membrane. It is found in the cell projection. The protein resides in the phagocytic cup. It localises to the early endosome. Its subcellular location is the nucleus. The protein localises to the secreted. Its function is as follows. Cell surface pattern recognition receptor that senses endogenous stress signals with a broad ligand repertoire including advanced glycation end products, S100 proteins, high-mobility group box 1 protein/HMGB1, amyloid beta/APP oligomers, nucleic acids, histones, phospholipids and glycosaminoglycans. Advanced glycosylation end products are nonenzymatically glycosylated proteins which accumulate in vascular tissue in aging and at an accelerated rate in diabetes. These ligands accumulate at inflammatory sites during the pathogenesis of various diseases including diabetes, vascular complications, neurodegenerative disorders and cancers, and RAGE transduces their binding into pro-inflammatory responses. Upon ligand binding, uses TIRAP and MYD88 as adapters to transduce the signal ultimately leading to the induction of inflammatory cytokines IL6, IL8 and TNFalpha through activation of NF-kappa-B. Interaction with S100A12 on endothelium, mononuclear phagocytes, and lymphocytes triggers cellular activation, with generation of key pro-inflammatory mediators. Interaction with S100B after myocardial infarction may play a role in myocyte apoptosis by activating ERK1/2 and p53/TP53 signaling. Contributes to the translocation of amyloid-beta peptide (ABPP) across the cell membrane from the extracellular to the intracellular space in cortical neurons. ABPP-initiated RAGE signaling, especially stimulation of p38 mitogen-activated protein kinase (MAPK), has the capacity to drive a transport system delivering ABPP as a complex with RAGE to the intraneuronal space. Participates in endothelial albumin transcytosis together with HMGB1 through the RAGE/SRC/Caveolin-1 pathway, leading to endothelial hyperpermeability. Mediates the loading of HMGB1 in extracellular vesicles (EVs) that shuttle HMGB1 to hepatocytes by transferrin-mediated endocytosis and subsequently promote hepatocyte pyroptosis by activating the NLRP3 inflammasome. Binds to DNA and promotes extracellular hypomethylated DNA (CpG DNA) uptake by cells via the endosomal route to activate inflammatory responses. Mediates phagocytosis by non-professional phagocytes (NPP) and this is enhanced by binding to ligands including RNA, DNA, HMGB1 and histones. Promotes NPP-mediated phagocytosis of Saccharomyces cerevisiae spores by binding to RNA attached to the spore wall. Also promotes NPP-mediated phagocytosis of apoptotic cells. Following DNA damage, recruited to DNA double-strand break sites where it colocalizes with the MRN repair complex via interaction with double-strand break repair protein MRE11. Enhances the endonuclease activity of MRE11, promoting the end resection of damaged DNA. Promotes DNA damage repair in trophoblasts which enhances trophoblast invasion and contributes to placental development and maintenance. Protects cells from DNA replication stress by localizing to damaged replication forks where it stabilizes the MCM2-7 complex and promotes faithful progression of the replication fork. Functionally, is able to advanced glycosylation end product (AGE)-induce nuclear factor NF-kappa-B activation. In terms of biological role, down-regulates receptor for advanced glycosylation end products (RAGE)-ligand induced signaling through various MAPK pathways including ERK1/2, p38 and SAPK/JNK. Significantly affects tumor cell properties through decreasing cell migration, invasion, adhesion and proliferation, and increasing cellular apoptosis. Exhibits drastic inhibition on tumorigenesis in vitro. This chain is Advanced glycosylation end product-specific receptor (Ager), found in Mus musculus (Mouse).